We begin with the raw amino-acid sequence, 295 residues long: Small ribosomal subunit protein bS1 (295 aa).

3 consecutive S1 motif domains span residues 28–97 (GQLV…VSLR), 115–179 (GQTV…LSER), and 193–261 (GQLI…LSTK).

This sequence belongs to the bacterial ribosomal protein bS1 family.

Binds mRNA. The sequence is that of Small ribosomal subunit protein bS1 (rpsA) from Synechococcus elongatus (strain ATCC 33912 / PCC 7942 / FACHB-805) (Anacystis nidulans R2).